We begin with the raw amino-acid sequence, 366 residues long: MKRRDVGSLFAGARVAESVPLAPLTTLRVGPVARTLVTCDTTDQVVGVLRELDDRARNGDCGPVLVFAGGSNVVIGDALADLTVVRVANDRVTIDGNLVRAEAGAVWDEVVVAAIERGLGGLECLSGIPGSAGATPVQNVGAYGVEVSDVITRVRLLDRSTGEVSWVPAADLSFGYRTSVLKQADGLALPAVVLEVEFALDASGRSAPLRYGELTAALGMNSGERGEPRAVRDAVLALRARKGMVLDAADHDTWSVGSFFTNPVVAPEIYERLAAQTGESVPHYPAPDGVKLAAGWLLERAGFGKGYPGDPHARCRLSSKHALALTNRGGATAADVMVLARTVRDGVRDVFGITLKPEPVLVGCAL.

Residues 29 to 203 enclose the FAD-binding PCMH-type domain; that stretch reads VGPVARTLVT…LEVEFALDAS (175 aa). Residue Arg-177 is part of the active site. Catalysis depends on Ser-258, which acts as the Proton donor. Glu-358 is a catalytic residue.

Belongs to the MurB family. It depends on FAD as a cofactor.

The protein localises to the cytoplasm. The catalysed reaction is UDP-N-acetyl-alpha-D-muramate + NADP(+) = UDP-N-acetyl-3-O-(1-carboxyvinyl)-alpha-D-glucosamine + NADPH + H(+). It participates in cell wall biogenesis; peptidoglycan biosynthesis. Cell wall formation. The protein is UDP-N-acetylenolpyruvoylglucosamine reductase of Mycobacterium marinum (strain ATCC BAA-535 / M).